The chain runs to 745 residues: Multiple C2 domain and transmembrane region protein 13 (745 aa).

A disordered region spans residues 1-30; sequence MAANKDEFSVKQISPKLGGERGARNPYGPT. 3 consecutive C2 domains span residues 21 to 139, 171 to 293, and 326 to 453; these read RGAR…PQRY, DASE…SAPA, and AEES…ACSY. Ca(2+) is bound by residues Asp56, Asp61, Asp106, and Asn110. Transmembrane regions (helical) follow at residues 568-588 and 688-708; these read SLIV…LVGL and FYCW…PMWL.

The protein belongs to the MCTP family. Requires Ca(2+) as cofactor. Expressed in incipient leaf primordia.

The protein resides in the cell membrane. It localises to the cytoplasm. Functionally, may function as a signaling molecule by regulating the trafficking of other regulators. The polypeptide is Multiple C2 domain and transmembrane region protein 13 (Arabidopsis thaliana (Mouse-ear cress)).